Here is a 549-residue protein sequence, read N- to C-terminus: Cation/acetate symporter ActP (549 aa).

Helical transmembrane passes span 33 to 53, 76 to 96, 103 to 123, 149 to 169, 183 to 203, 206 to 226, 262 to 282, 303 to 323, 355 to 375, 404 to 424, 428 to 448, 463 to 483, and 493 to 513; these read WQAI…TYWA, GLAI…SALV, GLIY…LIAE, LSAC…MVGA, IAVV…GMLA, WVQI…AFMV, ISAL…PHIL, GFMG…IMLV, LFLG…VAGL, VSKI…ILFE, IAFM…PIIL, IGGW…PTIW, and IFPY…GIWF.

Belongs to the sodium:solute symporter (SSF) (TC 2.A.21) family.

The protein resides in the cell inner membrane. Functionally, transports acetate. In Enterobacter sp. (strain 638), this protein is Cation/acetate symporter ActP.